The chain runs to 128 residues: LIM domain-containing protein 2 (128 aa).

An N-acetylmethionine modification is found at methionine 1. Residues 1 to 25 (MFQAAGAAQATPSHEAKGSSGSSTV) are disordered. Residues 39 to 99 (ETCAACQKTV…RPHFQQLFKS (61 aa)) form the LIM zinc-binding domain. Zn(2+)-binding residues include cysteine 41, cysteine 44, histidine 62, cysteine 65, cysteine 68, cysteine 71, cysteine 89, and histidine 92.

As to quaternary structure, interacts with ILK.

Its subcellular location is the cytoplasm. The protein resides in the nucleus. In terms of biological role, acts as an activator of the protein-kinase ILK, thereby regulating cell motility. The sequence is that of LIM domain-containing protein 2 from Mus musculus (Mouse).